Here is a 3579-residue protein sequence, read N- to C-terminus: Protocadherin-like wing polarity protein stan (3579 aa).

The N-terminal stretch at M1–S29 is a signal peptide. Residues Y30–S2816 lie on the Extracellular side of the membrane. 3 N-linked (GlcNAc...) asparagine glycosylation sites follow: N46, N179, and N340. Cadherin domains are found at residues E360–F464, E465–F581, S582–F689, Y690–F794, N795–F897, E898–F1007, K1008–F1113, and A1114–L1220. N671 carries N-linked (GlcNAc...) asparagine glycosylation. Residue N886 is glycosylated (N-linked (GlcNAc...) asparagine). Residues N1269, N1374, and N1441 are each glycosylated (N-linked (GlcNAc...) asparagine). The region spanning E1482–E1518 is the EGF-like 1; calcium-binding domain. Intrachain disulfides connect C1486/C1497, C1491/C1506, and C1508/C1517. Residues L1556–C1753 form the Laminin G-like 1 domain. Residues N1650, N1678, and N1747 are each glycosylated (N-linked (GlcNAc...) asparagine). 4 disulfide bridges follow: C1727–C1753, C1760–C1771, C1765–C1780, and C1782–C1791. The 37-residue stretch at K1756–Q1792 folds into the EGF-like 2; calcium-binding domain. Residues P1796–C1963 enclose the Laminin G-like 2 domain. N-linked (GlcNAc...) asparagine glycosylation occurs at N1843. 4 disulfide bridges follow: C1937–C1963, C1969–C1979, C1973–C1988, and C1990–C1999. In terms of domain architecture, EGF-like 3; calcium-binding spans S1965 to A2000. N-linked (GlcNAc...) asparagine glycosylation occurs at N1975. N-linked (GlcNAc...) asparagine glycans are attached at residues N2016, N2028, N2071, and N2088. 4 cysteine pairs are disulfide-bonded: C2092/C2095, C2097/C2114, C2116/C2125, and C2128/C2140. In terms of domain architecture, Laminin EGF-like spans C2095–V2142. N-linked (GlcNAc...) asparagine glycans are attached at residues N2196 and N2320. A compositionally biased stretch (basic and acidic residues) spans Q2553 to S2562. Disordered regions lie at residues Q2553–Q2582, H2610–P2635, and V2654–E2684. Over residues S2567 to S2579 the composition is skewed to low complexity. The GAIN-B domain occupies E2653–E2803. 2 disulfide bridges follow: C2747-C2785 and C2762-C2787. The tract at residues C2747–E2803 is GPS. N2784 carries N-linked (GlcNAc...) asparagine glycosylation. Residues Y2817–L2837 form a helical membrane-spanning segment. The Cytoplasmic portion of the chain corresponds to R2838–N2845. Residues T2846 to M2866 form a helical membrane-spanning segment. Over Q2867–A2883 the chain is Extracellular. Residues I2884–L2904 form a helical membrane-spanning segment. Residues Y2905–M2919 lie on the Cytoplasmic side of the membrane. Residues G2920–V2940 traverse the membrane as a helical segment. At R2941–V2959 the chain is on the extracellular side. A helical membrane pass occupies residues V2960–V2980. At S2981 to T3000 the chain is on the cytoplasmic side. Residues L3001–L3021 form a helical membrane-spanning segment. Residues A3022–S3031 are Extracellular-facing. The helical transmembrane segment at L3032 to I3052 threads the bilayer. The Cytoplasmic portion of the chain corresponds to N3053–V3579. 4 disordered regions span residues G3111–Y3225, L3343–Q3377, Y3458–P3486, and L3499–V3579. Positions S3113–S3128 are enriched in low complexity. Residues R3167–S3191 show a composition bias toward basic and acidic residues. Phosphoserine occurs at positions 3199 and 3200. Residues A3208–P3223 show a composition bias toward polar residues. Residues L3343–D3352 show a composition bias toward basic and acidic residues. Residues H3459–H3468 show a composition bias toward low complexity. The span at H3469–G3482 shows a compositional bias: basic and acidic residues. Polar residues predominate over residues H3501–M3513.

Belongs to the G-protein coupled receptor 2 family. Interacts with ATP6AP2 (via N-terminus). In terms of tissue distribution, in the pupal wing, expressed at relatively even levels in all regions. Abundant in 6-9 hours embryos. Expressed at higher levels in pupae than larvae.

It is found in the cell membrane. The protein resides in the apical cell membrane. Its function is as follows. Involved in the fz signaling pathway that controls wing tissue polarity. Also mediates homophilic cell adhesion. May play a role in initiating prehair morphogenesis. May play a critical role in tissue polarity and in formation of normal dendrite fields. During planar cell polarity, stabilizes asymmetric PCP domains together with ATP6AP2. The sequence is that of Protocadherin-like wing polarity protein stan (stan) from Drosophila melanogaster (Fruit fly).